Consider the following 147-residue polypeptide: Large ribosomal subunit protein uL13 (147 aa).

It belongs to the universal ribosomal protein uL13 family. In terms of assembly, part of the 50S ribosomal subunit.

In terms of biological role, this protein is one of the early assembly proteins of the 50S ribosomal subunit, although it is not seen to bind rRNA by itself. It is important during the early stages of 50S assembly. In Pseudothermotoga lettingae (strain ATCC BAA-301 / DSM 14385 / NBRC 107922 / TMO) (Thermotoga lettingae), this protein is Large ribosomal subunit protein uL13.